A 265-amino-acid polypeptide reads, in one-letter code: Imidazole glycerol phosphate synthase subunit HisF (265 aa).

Residues Asp17 and Asp136 contribute to the active site.

The protein belongs to the HisA/HisF family. Heterodimer of HisH and HisF.

Its subcellular location is the cytoplasm. It catalyses the reaction 5-[(5-phospho-1-deoxy-D-ribulos-1-ylimino)methylamino]-1-(5-phospho-beta-D-ribosyl)imidazole-4-carboxamide + L-glutamine = D-erythro-1-(imidazol-4-yl)glycerol 3-phosphate + 5-amino-1-(5-phospho-beta-D-ribosyl)imidazole-4-carboxamide + L-glutamate + H(+). Its pathway is amino-acid biosynthesis; L-histidine biosynthesis; L-histidine from 5-phospho-alpha-D-ribose 1-diphosphate: step 5/9. Functionally, IGPS catalyzes the conversion of PRFAR and glutamine to IGP, AICAR and glutamate. The HisF subunit catalyzes the cyclization activity that produces IGP and AICAR from PRFAR using the ammonia provided by the HisH subunit. The sequence is that of Imidazole glycerol phosphate synthase subunit HisF from Mycobacterium avium (strain 104).